The primary structure comprises 466 residues: Chromosomal replication initiator protein DnaA (466 aa).

Residues 1–86 (MSLSLWQQCL…EVGTKPVTQT (86 aa)) are domain I, interacts with DnaA modulators. Residues 86-129 (TLKTPVHNVVAPAQTTTAQPQRVAPAARSGWDNVPAPAEPTYRS) are domain II. Residues 130 to 346 (NVNVKHTFDN…GALNRVIANA (217 aa)) form a domain III, AAA+ region region. Positions 174, 176, 177, and 178 each coordinate ATP. A domain IV, binds dsDNA region spans residues 347–466 (NFTGRAITID…FSNLIRTLSS (120 aa)).

It belongs to the DnaA family. As to quaternary structure, oligomerizes as a right-handed, spiral filament on DNA at oriC.

Its subcellular location is the cytoplasm. Functionally, plays an essential role in the initiation and regulation of chromosomal replication. ATP-DnaA binds to the origin of replication (oriC) to initiate formation of the DNA replication initiation complex once per cell cycle. Binds the DnaA box (a 9 base pair repeat at the origin) and separates the double-stranded (ds)DNA. Forms a right-handed helical filament on oriC DNA; dsDNA binds to the exterior of the filament while single-stranded (ss)DNA is stabiized in the filament's interior. The ATP-DnaA-oriC complex binds and stabilizes one strand of the AT-rich DNA unwinding element (DUE), permitting loading of DNA polymerase. After initiation quickly degrades to an ADP-DnaA complex that is not apt for DNA replication. Binds acidic phospholipids. This Salmonella agona (strain SL483) protein is Chromosomal replication initiator protein DnaA.